A 116-amino-acid polypeptide reads, in one-letter code: PTS system N,N'-diacetylchitobiose-specific EIIA component (116 aa).

Positions E15–K113 constitute a PTS EIIA type-3 domain. Catalysis depends on H89, which acts as the Tele-phosphohistidine intermediate. The residue at position 89 (H89) is a Phosphohistidine; by HPr.

As to quaternary structure, forms a complex with ChbB (EIIB). ChbA is a homotrimer. It depends on Mg(2+) as a cofactor.

It is found in the cytoplasm. Functionally, the phosphoenolpyruvate-dependent sugar phosphotransferase system (sugar PTS), a major carbohydrate active transport system, catalyzes the phosphorylation of incoming sugar substrates concomitantly with their translocation across the cell membrane. The enzyme II ChbABC PTS system is involved in the transport of the chitin disaccharide N,N'-diacetylchitobiose (GlcNAc2). The polypeptide is PTS system N,N'-diacetylchitobiose-specific EIIA component (chbA) (Escherichia coli O157:H7).